The sequence spans 222 residues: Pyridoxine/pyridoxamine 5'-phosphate oxidase (222 aa).

Substrate contacts are provided by residues 11 to 14 (RVEY) and lysine 79. FMN-binding positions include 74–79 (RTVLCK), 89–90 (YT), lysine 96, and glutamine 118. Substrate-binding residues include tyrosine 136, arginine 140, and serine 144. FMN contacts are provided by residues 153 to 154 (QS) and tryptophan 199. Residue 205–207 (RVH) coordinates substrate. An FMN-binding site is contributed by arginine 209.

Belongs to the pyridoxamine 5'-phosphate oxidase family. As to quaternary structure, homodimer. Requires FMN as cofactor.

The catalysed reaction is pyridoxamine 5'-phosphate + O2 + H2O = pyridoxal 5'-phosphate + H2O2 + NH4(+). It catalyses the reaction pyridoxine 5'-phosphate + O2 = pyridoxal 5'-phosphate + H2O2. The protein operates within cofactor metabolism; pyridoxal 5'-phosphate salvage; pyridoxal 5'-phosphate from pyridoxamine 5'-phosphate: step 1/1. It functions in the pathway cofactor metabolism; pyridoxal 5'-phosphate salvage; pyridoxal 5'-phosphate from pyridoxine 5'-phosphate: step 1/1. In terms of biological role, catalyzes the oxidation of either pyridoxine 5'-phosphate (PNP) or pyridoxamine 5'-phosphate (PMP) into pyridoxal 5'-phosphate (PLP). The polypeptide is Pyridoxine/pyridoxamine 5'-phosphate oxidase (Mycolicibacterium vanbaalenii (strain DSM 7251 / JCM 13017 / BCRC 16820 / KCTC 9966 / NRRL B-24157 / PYR-1) (Mycobacterium vanbaalenii)).